The following is a 326-amino-acid chain: Putative HTH-type transcriptional regulatory protein MmarC5_0898 (326 aa).

In terms of domain architecture, HTH cro/C1-type spans 128–183 (LRETREKLKISVGELAEISRVSRKTIYKYEQNEANPSAEVAIKIEEYLDVPLIKGI). The H-T-H motif DNA-binding region spans 139 to 158 (VGELAEISRVSRKTIYKYEQ).

This is Putative HTH-type transcriptional regulatory protein MmarC5_0898 from Methanococcus maripaludis (strain C5 / ATCC BAA-1333).